We begin with the raw amino-acid sequence, 943 residues long: Sodium- and chloride-dependent GABA transporter ine (943 aa).

The Cytoplasmic portion of the chain corresponds to M1–Q345. Residues H103–L122 are disordered. The next 3 membrane-spanning stretches (helical) occupy residues F346–M366, G373–M393, and G418–I438. Topologically, residues G439 to W510 are extracellular. Residue N476 is glycosylated (N-linked (GlcNAc...) asparagine). The next 9 helical transmembrane spans lie at E511–I531, Y539–L559, F591–Y607, T618–S638, W679–V699, I723–G743, Y754–F774, C799–Y819, and Y836–I856. Topologically, residues N857 to Q943 are cytoplasmic.

The protein belongs to the sodium:neurotransmitter symporter (SNF) (TC 2.A.22) family. In terms of tissue distribution, expressed both maternally and zygotically. Developing embryos exhibit expression in the posterior hindgut, foregut, midgut, Malpighian tubules, anal plate, Garland cells, and a subset of cells in the central nervous system. Central nervous system expression is seen in segmentally repeating in cells flanking the midline of the ventral ganglion. Isoform A and isoform B are colocalized in both the nervous system and the fluid reabsorption system.

The protein resides in the membrane. In terms of biological role, plays a role in neuronal membrane excitation, important for normal response properties of the photoreceptor. Able to control excitability from either neurons or glia cells. Ine negatively regulates neuronal sodium channels. Controls neurotransmitter-mediated signaling pathways associated with the structure of the larval peripheral nerve, ine and eag control perineurial glial growth through partially redundant pathways. Isoform A and isoform B are both functional, although isoform A functions with greater efficiency. Has a role in osmolyte transport within the Malpighian tubule and hindgut. This Drosophila melanogaster (Fruit fly) protein is Sodium- and chloride-dependent GABA transporter ine.